The primary structure comprises 587 residues: Branchpoint-bridging protein (587 aa).

Polar residues predominate over residues 1 to 16; it reads MLNSRSVGSTGSNNTP. Disordered regions lie at residues 1–64 and 121–142; these read MLNS…DGRG and GDVV…DNHG. A compositionally biased stretch (basic and acidic residues) spans 44 to 64; the sequence is DSYKSNSRMDHRPDGYHDGRG. Ser-131 and Ser-133 each carry phosphoserine. Positions 191 to 271 constitute a KH domain; it reads YVPVKDYPEI…DKINHAIKLI (81 aa). CCHC-type zinc fingers lie at residues 309 to 326 and 334 to 351; these read QVCQ…DCPE and IVCR…DCPV. 2 disordered regions span residues 375 to 490 and 551 to 587; these read GGGS…PGTS and IPGA…YSNR. A compositionally biased stretch (polar residues) spans 379–399; it reads AISNGNGEPQKSIEFSESGAA. Residues 410-454 show a composition bias toward low complexity; it reads AAASTSVSSSTSSPAPWAKPASSAAPSNPAPWQQPAAPQSAPALS. Composition is skewed to polar residues over residues 465–483 and 563–573; these read QPTQ…SQNA and SYNTSESSNLN.

This sequence belongs to the BBP/SF1 family. In terms of assembly, U2AF large subunit (u2af59), U2AF small subunit (u2af23) and bpb1 interact to form a complex required for complex A formation.

It is found in the cytoplasm. The protein resides in the nucleus. Necessary for the splicing of pre-mRNA. The BPB1(SF1)-u2af59-u2af23 complex has a role in the recognition of the branch site (5'-UACUAAC-3'), the pyrimidine tract and the 3'-splice site at the 3'-end of introns. This is Branchpoint-bridging protein (bpb1) from Schizosaccharomyces pombe (strain 972 / ATCC 24843) (Fission yeast).